An 88-amino-acid polypeptide reads, in one-letter code: Large ribosomal subunit protein bL27 (88 aa).

Belongs to the bacterial ribosomal protein bL27 family.

This is Large ribosomal subunit protein bL27 from Carboxydothermus hydrogenoformans (strain ATCC BAA-161 / DSM 6008 / Z-2901).